The primary structure comprises 597 residues: Elongation factor 4 (597 aa).

The region spanning 2 to 184 (KHIRNFSIIA…NIVSAIPAPE (183 aa)) is the tr-type G domain. GTP contacts are provided by residues 14–19 (DHGKST) and 131–134 (NKID).

It belongs to the TRAFAC class translation factor GTPase superfamily. Classic translation factor GTPase family. LepA subfamily.

Its subcellular location is the cell inner membrane. The catalysed reaction is GTP + H2O = GDP + phosphate + H(+). Its function is as follows. Required for accurate and efficient protein synthesis under certain stress conditions. May act as a fidelity factor of the translation reaction, by catalyzing a one-codon backward translocation of tRNAs on improperly translocated ribosomes. Back-translocation proceeds from a post-translocation (POST) complex to a pre-translocation (PRE) complex, thus giving elongation factor G a second chance to translocate the tRNAs correctly. Binds to ribosomes in a GTP-dependent manner. In Vibrio campbellii (strain ATCC BAA-1116), this protein is Elongation factor 4.